We begin with the raw amino-acid sequence, 338 residues long: MSATAVPKAKRIPQWKIEEVEYLTTLFKSYPVFAIADLTGFPTNQLQKLRKKLSKKVLFRVSKNKLILRALRNAGIDTSKFEELLTGQNLLLFTHMNAFELSLLLDKYKAKTYYKPGEIAQQEIVIPEGNTGLSPGPILSTFSKLKIPTRIQGNSIVITRDTVVAKPGDTISEELASLLQRLDIALKEVKINIKAAYDHGIIILRDQLVLDLEEYKNMVMNAHLDALKIGSEIAWPVPEILELSLNKAFRQALALAAEAGYVTPDTAEYVFRAAIMKALALAAEVSKYAPDLGLEVPTIQPTTPPEKKEEEEKKEEEEEEAETVSEEELAEGLGALFG.

The disordered stretch occupies residues 295–338 (EVPTIQPTTPPEKKEEEEKKEEEEEEAETVSEEELAEGLGALFG). Residues 312–330 (EKKEEEEEEAETVSEEELA) are compositionally biased toward acidic residues.

It belongs to the universal ribosomal protein uL10 family. In terms of assembly, part of the 50S ribosomal subunit. Forms part of the ribosomal stalk which helps the ribosome interact with GTP-bound translation factors. Forms a heptameric L10(L12)2(L12)2(L12)2 complex, where L10 forms an elongated spine to which the L12 dimers bind in a sequential fashion.

Forms part of the ribosomal stalk, playing a central role in the interaction of the ribosome with GTP-bound translation factors. In Staphylothermus marinus (strain ATCC 43588 / DSM 3639 / JCM 9404 / F1), this protein is Large ribosomal subunit protein uL10.